The sequence spans 545 residues: Tripartite motif-containing protein 26 (545 aa).

An RING-type zinc finger spans residues 16 to 57; it reads CSICLDYLRDPVTIDCGHVFCRSCTSDIRPISGNRPVCPLCK. The segment at 97–138 adopts a B box-type zinc-finger fold; that stretch reads QDMKLCERHQEKLHYYCEDDGKLLCVMCRESREHRPHTAVLV. 4 residues coordinate Zn(2+): cysteine 102, histidine 105, cysteine 124, and histidine 130. A coiled-coil region spans residues 197 to 243; that stretch reads QFLKKREQHLLDQLATLEQLLTEGREKFKTRGVSELDRLTLVISELE. The B30.2/SPRY domain occupies 301–545; the sequence is RGLRQFQGKL…WPGARLLLRP (245 aa). The tract at residues 382-443 is disordered; it reads REGWSEDEEE…EEEEEVQESC (62 aa). Over residues 386–440 the composition is skewed to acidic residues; sequence SEDEEEGEEEEEGEEEEEDEEVGYGDGYEDWETDEEDESLGEEEEEEEEEEEEVQ.

This sequence belongs to the TRIM/RBCC family. In terms of assembly, interacts with TBK1; this interaction bridges together TBK1 and NEMO in order to activate TBK1. Interacts with INCA1. In terms of processing, autoubiquitinates upon viral infection. In turn, autoubiquitinated TRIM26 recruits NEMO and bridges TBK1-NEMO interaction.

Its subcellular location is the cytoplasm. It is found in the nucleus. The catalysed reaction is S-ubiquitinyl-[E2 ubiquitin-conjugating enzyme]-L-cysteine + [acceptor protein]-L-lysine = [E2 ubiquitin-conjugating enzyme]-L-cysteine + N(6)-ubiquitinyl-[acceptor protein]-L-lysine.. E3 ubiquitin-protein ligase which regulates the IFN-beta production and antiviral response downstream of various DNA-encoded pattern-recognition receptors (PRRs). Also plays a central role in determining the response to different forms of oxidative stress by controlling levels of DNA glycosylases NEIL1, NEIL3 and NTH1 that are involved in repair of damaged DNA. Promotes nuclear IRF3 ubiquitination and proteasomal degradation. Bridges together TBK1 and NEMO during the innate response to viral infection leading to the activation of TBK1. Positively regulates LPS-mediated inflammatory innate immune response by catalyzing the 'Lys-11'-linked polyubiquitination of TAB1 to enhance its activation and subsequent NF-kappa-B and MAPK signaling. In a manner independent of its catalytic activity, inhibits WWP2, a SOX2-directed E3 ubiquitin ligase, and thus protects SOX2 from polyubiquitination and proteasomal degradation. Ubiquitinates the histone acetyltransferase protein complex component PHF20 and thereby triggers its degradation in the nucleus after its recruitment by the histone demethylase KDM6B, serving as a scaffold protein. Upon induction by TGF-beta, ubiquitinates the TFIID component TAF7 for proteasomal degradation. Induces ferroptosis by ubiquitinating SLC7A11, a critical protein for lipid reactive oxygen species (ROS) scavenging. This Mus musculus (Mouse) protein is Tripartite motif-containing protein 26 (Trim26).